The following is a 202-amino-acid chain: Holliday junction resolvase RecU (202 aa).

Residues Thr-85, Asp-87, Glu-100, and Gln-119 each contribute to the Mg(2+) site.

The protein belongs to the RecU family. It depends on Mg(2+) as a cofactor.

It localises to the cytoplasm. It catalyses the reaction Endonucleolytic cleavage at a junction such as a reciprocal single-stranded crossover between two homologous DNA duplexes (Holliday junction).. Functionally, endonuclease that resolves Holliday junction intermediates in genetic recombination. Cleaves mobile four-strand junctions by introducing symmetrical nicks in paired strands. Promotes annealing of linear ssDNA with homologous dsDNA. Required for DNA repair, homologous recombination and chromosome segregation. The polypeptide is Holliday junction resolvase RecU (Streptococcus equi subsp. equi (strain 4047)).